A 68-amino-acid chain; its full sequence is C-hordein (68 aa).

Pro residues-rich tracts occupy residues Y1 to P24 and P33 to P55. The disordered stretch occupies residues Y1 to V68. A compositionally biased stretch (polar residues) spans Y59–V68.

In terms of tissue distribution, developing endosperm.

Its function is as follows. Sulfur-poor seed storage protein. In Hordeum vulgare (Barley), this protein is C-hordein.